Consider the following 113-residue polypeptide: U11-theraphotoxin-Hhn1a (113 aa).

An N-terminal signal peptide occupies residues 1–21 (MNTVRVTFLLVFVLAVSLGQA). Residues 22–74 (DKDENRMEMQEKTEQGESYLDFAENLLLQKLEELEAKLLEEDSEESRNSRQKR) constitute a propeptide that is removed on maturation. Intrachain disulfides connect Cys-75–Cys-90, Cys-82–Cys-95, and Cys-89–Cys-110.

Belongs to the neurotoxin 14 (magi-1) family. 01 (HNTX-16) subfamily. As to expression, expressed by the venom gland.

It is found in the secreted. Its function is as follows. Probable ion channel inhibitor. The sequence is that of U11-theraphotoxin-Hhn1a from Cyriopagopus hainanus (Chinese bird spider).